The sequence spans 312 residues: Aquaporin Lacbi1:391485 (312 aa).

Residues 1–50 (MDDKFDDDALPNSKTTPEDYGDKLAEYDYTNTFPNTWMRLREPFREYIAE) lie on the Cytoplasmic side of the membrane. The helical transmembrane segment at 51–71 (FVGVAVLIIFGVGADCQVVLS) threads the bilayer. Residues 72–89 (ANTGVAPSPKGDYLSLNC) are Extracellular-facing. The chain crosses the membrane as a helical span at residues 90–110 (GWAIGTAMGVWISGGISGGHI). The short motif at 111–113 (NPA) is the NPA 1 element. At 111 to 128 (NPAVTLALMAWRGFPWWK) the chain is on the cytoplasmic side. A helical transmembrane segment spans residues 129–149 (VPGFIFAQLLGGIVGAGLVYV). Residues 150 to 183 (NYIHAIDIVEGGRHIRTLDTAGLFATYAADYMTN) lie on the Extracellular side of the membrane. A glycan (N-linked (GlcNAc...) asparagine) is linked at N183. The helical transmembrane segment at 184–204 (VSCFFSEFLATAVLIVVIHAM) threads the bilayer. The Cytoplasmic segment spans residues 205–213 (NDKRNAPPP). A helical transmembrane segment spans residues 214–234 (AGLAPLVLFFLILGIGASLGM). Over 235 to 267 (ETGYAINPARDLGPRMLTAMVGYGRQVFAFRNQ) the chain is Extracellular. An NPA 2 motif is present at residues 241–243 (NPA). A helical transmembrane segment spans residues 268–288 (YWIWCPVIAPFLGAQVGTIFY). Over 289-312 (DLFFYKGQDNVFGRLGSHIHISPA) the chain is Cytoplasmic.

The protein belongs to the MIP/aquaporin (TC 1.A.8) family.

The protein resides in the membrane. The catalysed reaction is H2O(in) = H2O(out). It carries out the reaction glycerol(in) = glycerol(out). The enzyme catalyses NH4(+)(in) = NH4(+)(out). Functionally, water channel required to facilitate the transport of water across membranes. In addition to water, also shows strong glycerol and ammonium transport activities. May be involved in fungal nitrogen (ammonium) support of the plant host in symbiosis. Glycerol accumulation has never been observed in ectomycorrhizal (ECM) fungi, therefore, glycerol permeability of Lacbi1:391485 might be a relict of the affiliation of the protein to the group of aquaglyceroporins, and other osmotic active compounds (e.g. trehalose or mannitol) may have taken over glycerol function in ECM fungi. The polypeptide is Aquaporin Lacbi1:391485 (Laccaria bicolor (strain S238N-H82 / ATCC MYA-4686) (Bicoloured deceiver)).